The following is a 268-amino-acid chain: Myeloid leukemia factor 1 (268 aa).

3 positions are modified to phosphoserine: Ser-8, Ser-32, and Ser-34. 2 disordered regions span residues 44–66 and 209–268; these read ISDG…SLTH and GRHN…SNKK. An interaction with COPS3 region spans residues 50 to 125; the sequence is RAHNRRGHND…IGDEPPKVFQ (76 aa). Basic and acidic residues-rich tracts occupy residues 56 to 65 and 226 to 237; these read GHNDGEDSLT and PGSRELKRREKP.

Belongs to the MLF family. In terms of assembly, interacts with CENPU. Also interacts with NRBP1/MADM, YWHAZ/14-3-3-zeta and HNRPUL2/MANP. NRBP1 recruits a serine kinase which phosphorylates both itself and MLF1. Phosphorylated MLF1 then binds to YWHAZ and is retained in the cytoplasm. Retained in the nucleus by binding to HNRPUL2. Binds to COPS3/CSN3 which is required for suppression of COP1 and activation of p53. Post-translationally, phosphorylation is required for binding to YWHAZ. As to expression, most abundant in testis, ovary, skeletal muscle, heart, kidney and colon. Low expression in spleen, thymus and peripheral blood leukocytes.

The protein resides in the cytoplasm. Its subcellular location is the nucleus. The protein localises to the cell projection. It localises to the cilium. It is found in the cytoskeleton. The protein resides in the cilium basal body. Its function is as follows. Involved in lineage commitment of primary hemopoietic progenitors by restricting erythroid formation and enhancing myeloid formation. Interferes with erythropoietin-induced erythroid terminal differentiation by preventing cells from exiting the cell cycle through suppression of CDKN1B/p27Kip1 levels. Suppresses COP1 activity via CSN3 which activates p53 and induces cell cycle arrest. Binds DNA and affects the expression of a number of genes so may function as a transcription factor in the nucleus. This Homo sapiens (Human) protein is Myeloid leukemia factor 1 (MLF1).